Consider the following 178-residue polypeptide: Large ribosomal subunit protein bL25 (178 aa).

The protein belongs to the bacterial ribosomal protein bL25 family. CTC subfamily. As to quaternary structure, part of the 50S ribosomal subunit; part of the 5S rRNA/L5/L18/L25 subcomplex. Contacts the 5S rRNA. Binds to the 5S rRNA independently of L5 and L18.

Its function is as follows. This is one of the proteins that binds to the 5S RNA in the ribosome where it forms part of the central protuberance. The polypeptide is Large ribosomal subunit protein bL25 (Sulfurimonas denitrificans (strain ATCC 33889 / DSM 1251) (Thiomicrospira denitrificans (strain ATCC 33889 / DSM 1251))).